We begin with the raw amino-acid sequence, 221 residues long: ATP-dependent Clp protease proteolytic subunit 3 (221 aa).

S118 acts as the Nucleophile in catalysis. Residue H143 is part of the active site.

It belongs to the peptidase S14 family. Fourteen ClpP subunits assemble into 2 heptameric rings which stack back to back to give a disk-like structure with a central cavity, resembling the structure of eukaryotic proteasomes.

The protein localises to the cytoplasm. It carries out the reaction Hydrolysis of proteins to small peptides in the presence of ATP and magnesium. alpha-casein is the usual test substrate. In the absence of ATP, only oligopeptides shorter than five residues are hydrolyzed (such as succinyl-Leu-Tyr-|-NHMec, and Leu-Tyr-Leu-|-Tyr-Trp, in which cleavage of the -Tyr-|-Leu- and -Tyr-|-Trp bonds also occurs).. Cleaves peptides in various proteins in a process that requires ATP hydrolysis. Has a chymotrypsin-like activity. Plays a major role in the degradation of misfolded proteins. In Nocardia farcinica (strain IFM 10152), this protein is ATP-dependent Clp protease proteolytic subunit 3.